The following is a 412-amino-acid chain: Transcription factor IIIA (412 aa).

The segment at 20-43 adopts a C2H2-type 1; degenerate zinc-finger fold; that stretch reads YLCQYCGISRSKNYLITKHIQSHH. 3 consecutive C2H2-type zinc fingers follow at residues 66–88, 94–118, and 123–148; these read HTCQECGAEFKKPAHLKQHMQSH, FTCYVDDCAASYRRKDHLNRHLLTH, and FKCPKENCKSEFSVQGNVGRHVKKYH. The segment at 144-207 is disordered; sequence VKKYHSNDNR…NGNGDSQPAE (64 aa). Over residues 148–188 the composition is skewed to basic and acidic residues; the sequence is HSNDNRDKDNTGLGDGDKDNTCKGDDDKEKSGSGGCEKENE. Residue lysine 185 forms a Glycyl lysine isopeptide (Lys-Gly) (interchain with G-Cter in ubiquitin) linkage. A C2H2-type 5 zinc finger spans residues 215–239; that stretch reads VVCKEIGCGKAFKYPSQLQKHQDSH. The segment at 247 to 272 adopts a C2H2-type 6; degenerate zinc-finger fold; that stretch reads AFCSEPGCMKYFTNEECLKSHIRSCH. The segment at 275–296 adopts a C2H2-type 7; degenerate zinc-finger fold; the sequence is INCEICGSKHLKKNIKRHLRTH. Residues 305-330 form a C2H2-type 8 zinc finger; it reads IKCEVEGCSSTFSKASNLQKHMKAVH. The C2H2-type 9; degenerate zinc finger occupies 336 to 362; sequence FVCGFPGCGMRFAYKHVRNKHENSGYH. The short motif at 384-391 is the Nuclear localization signal element; it reads LKRKQVTA.

Post-translationally, protein product TFIIIA (44 kDa) is proteolytically cleaved into TFIIIA-C (34 kDa). As to expression, expressed in seedlings, flowers, siliques and seeds.

The protein localises to the nucleus. It is found in the nucleolus. Its function is as follows. Essential protein. Isoform 1 is a transcription activator the binds both 5S rDNA and 5S rRNA and stimulates the transcription of 5S rRNA gene. Isoform 1 regulates 5S rRNA levels during development. The polypeptide is Transcription factor IIIA (Arabidopsis thaliana (Mouse-ear cress)).